We begin with the raw amino-acid sequence, 356 residues long: 3-dehydroquinate synthase (356 aa).

Residues 101 to 105 (GVIGD), 125 to 126 (TT), Lys138, and Lys147 each bind NAD(+). Residues Glu180, His243, and His260 each contribute to the Zn(2+) site.

It belongs to the sugar phosphate cyclases superfamily. Dehydroquinate synthase family. Co(2+) is required as a cofactor. Requires Zn(2+) as cofactor. NAD(+) serves as cofactor.

The protein localises to the cytoplasm. The enzyme catalyses 7-phospho-2-dehydro-3-deoxy-D-arabino-heptonate = 3-dehydroquinate + phosphate. It functions in the pathway metabolic intermediate biosynthesis; chorismate biosynthesis; chorismate from D-erythrose 4-phosphate and phosphoenolpyruvate: step 2/7. Its function is as follows. Catalyzes the conversion of 3-deoxy-D-arabino-heptulosonate 7-phosphate (DAHP) to dehydroquinate (DHQ). This chain is 3-dehydroquinate synthase, found in Alkaliphilus metalliredigens (strain QYMF).